A 1217-amino-acid polypeptide reads, in one-letter code: ATP-dependent RNA helicase DHX30 (1217 aa).

2 positions are modified to phosphoserine: D15 and S29. One can recognise a DRBM domain in the interval P76 to F144. Residues W176–G223 form a disordered region. A compositionally biased stretch (acidic residues) spans E211–G223. A phosphoserine mark is found at S249 and S403. The 169-residue stretch at L467–P635 folds into the Helicase ATP-binding domain. Residue G480–T487 coordinates ATP. Residues D582–H585 carry the DEAH box motif. Residues L677–M850 enclose the Helicase C-terminal domain.

This sequence belongs to the DEAD box helicase family. DEAH subfamily. As to quaternary structure, identified in a complex with TFAM and SSBP1. Interacts (via N-terminus) with ZC3HAV1 (via N-terminal domain) in an RNA-independent manner. Found in a complex with GRSF1, DDX28, FASTKD2 and FASTKD5. In terms of processing, phosphorylated on Ser-15. In terms of tissue distribution, expressed in the heart, brain, spleen, lung, liver, skeletal muscle, kidney, and testis. Expression is strongest in the testis and brain, while the lowest levels of expression are found in the spleen and lung.

The protein resides in the cytoplasm. It is found in the mitochondrion. Its subcellular location is the mitochondrion matrix. It localises to the mitochondrion nucleoid. It carries out the reaction ATP + H2O = ADP + phosphate + H(+). RNA-dependent helicase. Plays an important role in the assembly of the mitochondrial large ribosomal subunit. Required for optimal function of the zinc-finger antiviral protein ZC3HAV1. Associates with mitochondrial DNA. Involved in nervous system development and differentiation through its involvement in the up-regulation of a number of genes which are required for neurogenesis, including GSC, NCAM1, neurogenin, and NEUROD. This is ATP-dependent RNA helicase DHX30 (Dhx30) from Mus musculus (Mouse).